The primary structure comprises 237 residues: uncharacterized protein (237 aa).

The first 28 residues, 1–28 (MVFSFSTFNRLVTFTVMAAIVSVRPLTA), serve as a signal peptide directing secretion.

This is an uncharacterized protein from Sinorhizobium fredii (strain NBRC 101917 / NGR234).